A 427-amino-acid chain; its full sequence is ATP-dependent RNA helicase DDX39A (427 aa).

Acidic residues predominate over residues 1-19 (MAEQDVENELLDYDEDEEP). The tract at residues 1–35 (MAEQDVENELLDYDEDEEPQVPQESTPAPPKKDVK) is disordered. N-acetylalanine is present on alanine 2. A Glycyl lysine isopeptide (Lys-Gly) (interchain with G-Cter in SUMO2) cross-link involves residue lysine 31. Lysine 35 is modified (N6-acetyllysine; alternate). Residue lysine 35 forms a Glycyl lysine isopeptide (Lys-Gly) (interchain with G-Cter in SUMO2); alternate linkage. A Phosphoserine modification is found at serine 37. A Q motif motif is present at residues 44–72 (SGFRDFLLKPELLRAIVDCGFEHPSEVQH). Positions 75–248 (IPQAILGMDV…RKFMQDPMEV (174 aa)) constitute a Helicase ATP-binding domain. 88-95 (AKSGMGKT) contacts ATP. Residues lysine 154 and lysine 162 each participate in a glycyl lysine isopeptide (Lys-Gly) (interchain with G-Cter in SUMO2) cross-link. A Phosphothreonine modification is found at threonine 171. The short motif at 195–198 (DECD) is the DECD box element. Residues lysine 240 and lysine 255 each participate in a glycyl lysine isopeptide (Lys-Gly) (interchain with G-Cter in SUMO2) cross-link. One can recognise a Helicase C-terminal domain in the interval 260-421 (GLQQYYVKLK…ELPEEIDIST (162 aa)). Serine 426 carries the phosphoserine modification.

The protein belongs to the DEAD box helicase family. DECD subfamily. Binds ALYREF/THOC4 and DDX39B/BAT1. Interacts with the apo-AREX complex component SARNP. Interacts with MX1. Interacts with MCM3AP isoform GANP. Interacts with ECD. Interacts with PHAX; this interaction stimulates PHAX RNA binding activity. SUMOylated by RANBP2; SUMOylation modification affects its ability to bind RNA.

It is found in the nucleus. The protein resides in the cytoplasm. It carries out the reaction ATP + H2O = ADP + phosphate + H(+). Its function is as follows. Helicase that plays an essential role in mRNA export and is involved in multiple steps in RNA metabolism including alternative splicing. Regulates nuclear mRNA export to the cytoplasm through association with ECD. Also involved in spliceosomal uridine-rich small nuclear RNA (U snRNA) export by stimulating the RNA binding of adapter PHAX. Plays a role in the negative regulation of type I IFN production by increasing the nuclear retention of antiviral transcripts and thus reducing their protein expression. Independently of the interferon pathway, plays an antiviral role against alphaviruses by binding to a 5' conserved sequence element in the viral genomic RNA. In Rattus norvegicus (Rat), this protein is ATP-dependent RNA helicase DDX39A (Ddx39a).